Here is a 148-residue protein sequence, read N- to C-terminus: Lysozyme C (148 aa).

Residues 1–18 (MKALIILGLVLLSVTVQG) form the signal peptide. Residues 19–148 (KIFERCELAR…VSQYVKGCGV (130 aa)) enclose the C-type lysozyme domain. 4 disulfides stabilise this stretch: C24/C146, C48/C134, C83/C99, and C95/C113. Residues E53 and D71 contribute to the active site.

This sequence belongs to the glycosyl hydrolase 22 family. As to quaternary structure, monomer.

The protein localises to the secreted. The catalysed reaction is Hydrolysis of (1-&gt;4)-beta-linkages between N-acetylmuramic acid and N-acetyl-D-glucosamine residues in a peptidoglycan and between N-acetyl-D-glucosamine residues in chitodextrins.. Its function is as follows. Lysozymes have primarily a bacteriolytic function; those in tissues and body fluids are associated with the monocyte-macrophage system and enhance the activity of immunoagents. This Nasalis larvatus (Proboscis monkey) protein is Lysozyme C (LYZ).